The sequence spans 241 residues: 1-Cys peroxiredoxin (241 aa).

The Thioredoxin domain occupies 33-189; sequence LRIGDVVPDF…IIRILDSFQL (157 aa). Residue C75 is the Cysteine sulfenic acid (-SOH) intermediate of the active site.

The protein belongs to the peroxiredoxin family. Prx6 subfamily. As to quaternary structure, homodimer.

The catalysed reaction is a hydroperoxide + [thioredoxin]-dithiol = an alcohol + [thioredoxin]-disulfide + H2O. Thiol-specific peroxidase that catalyzes the reduction of hydrogen peroxide and organic hydroperoxides to water and alcohols, respectively. Plays a role in cell protection against oxidative stress by detoxifying peroxides. The sequence is that of 1-Cys peroxiredoxin from Dictyostelium discoideum (Social amoeba).